A 189-amino-acid polypeptide reads, in one-letter code: GTP cyclohydrolase 1 (189 aa).

3 residues coordinate Zn(2+): Cys-80, His-83, and Cys-152.

This sequence belongs to the GTP cyclohydrolase I family. As to quaternary structure, toroid-shaped homodecamer, composed of two pentamers of five dimers.

The catalysed reaction is GTP + H2O = 7,8-dihydroneopterin 3'-triphosphate + formate + H(+). It functions in the pathway cofactor biosynthesis; 7,8-dihydroneopterin triphosphate biosynthesis; 7,8-dihydroneopterin triphosphate from GTP: step 1/1. In Latilactobacillus sakei subsp. sakei (strain 23K) (Lactobacillus sakei subsp. sakei), this protein is GTP cyclohydrolase 1.